Here is a 102-residue protein sequence, read N- to C-terminus: UPF0251 protein ASA_1331 (102 aa).

Belongs to the UPF0251 family.

The sequence is that of UPF0251 protein ASA_1331 from Aeromonas salmonicida (strain A449).